Reading from the N-terminus, the 484-residue chain is Chromosomal replication initiator protein DnaA (484 aa).

The tract at residues 1–73 (MQEGKNIWSL…EILIEKGHNT (73 aa)) is domain I, interacts with DnaA modulators. The tract at residues 73-140 (TINVEFINSP…EEIHTKYRNP (68 aa)) is domain II. Residues 141 to 357 (FLKKKYTFEN…AAVTKLKAHI (217 aa)) form a domain III, AAA+ region region. ATP contacts are provided by G185, G187, K188, and T189. The interval 358–484 (DLEDIEIDTS…IELMNKINKK (127 aa)) is domain IV, binds dsDNA.

This sequence belongs to the DnaA family. As to quaternary structure, oligomerizes as a right-handed, spiral filament on DNA at oriC.

It localises to the cytoplasm. In terms of biological role, plays an essential role in the initiation and regulation of chromosomal replication. ATP-DnaA binds to the origin of replication (oriC) to initiate formation of the DNA replication initiation complex once per cell cycle. Binds the DnaA box (a 9 base pair repeat at the origin) and separates the double-stranded (ds)DNA. Forms a right-handed helical filament on oriC DNA; dsDNA binds to the exterior of the filament while single-stranded (ss)DNA is stabiized in the filament's interior. The ATP-DnaA-oriC complex binds and stabilizes one strand of the AT-rich DNA unwinding element (DUE), permitting loading of DNA polymerase. After initiation quickly degrades to an ADP-DnaA complex that is not apt for DNA replication. Binds acidic phospholipids. This Borrelia hermsii (strain HS1 / DAH) protein is Chromosomal replication initiator protein DnaA.